A 126-amino-acid polypeptide reads, in one-letter code: Aspartate 1-decarboxylase (126 aa).

The active-site Schiff-base intermediate with substrate; via pyruvic acid is the Ser25. The residue at position 25 (Ser25) is a Pyruvic acid (Ser). Thr57 is a substrate binding site. Catalysis depends on Tyr58, which acts as the Proton donor. 73 to 75 lines the substrate pocket; it reads GSA.

It belongs to the PanD family. Heterooctamer of four alpha and four beta subunits. The cofactor is pyruvate. In terms of processing, is synthesized initially as an inactive proenzyme, which is activated by self-cleavage at a specific serine bond to produce a beta-subunit with a hydroxyl group at its C-terminus and an alpha-subunit with a pyruvoyl group at its N-terminus.

Its subcellular location is the cytoplasm. It carries out the reaction L-aspartate + H(+) = beta-alanine + CO2. The protein operates within cofactor biosynthesis; (R)-pantothenate biosynthesis; beta-alanine from L-aspartate: step 1/1. Its function is as follows. Catalyzes the pyruvoyl-dependent decarboxylation of aspartate to produce beta-alanine. In Chromobacterium violaceum (strain ATCC 12472 / DSM 30191 / JCM 1249 / CCUG 213 / NBRC 12614 / NCIMB 9131 / NCTC 9757 / MK), this protein is Aspartate 1-decarboxylase.